We begin with the raw amino-acid sequence, 292 residues long: Elongation factor Ts (292 aa).

Residues 79–82 (TDFV) are involved in Mg(2+) ion dislocation from EF-Tu.

The protein belongs to the EF-Ts family.

It localises to the cytoplasm. Associates with the EF-Tu.GDP complex and induces the exchange of GDP to GTP. It remains bound to the aminoacyl-tRNA.EF-Tu.GTP complex up to the GTP hydrolysis stage on the ribosome. This chain is Elongation factor Ts, found in Xanthomonas oryzae pv. oryzae (strain MAFF 311018).